The following is a 113-amino-acid chain: Large ribosomal subunit protein uL24 (113 aa).

This sequence belongs to the universal ribosomal protein uL24 family. As to quaternary structure, part of the 50S ribosomal subunit.

Its function is as follows. One of two assembly initiator proteins, it binds directly to the 5'-end of the 23S rRNA, where it nucleates assembly of the 50S subunit. One of the proteins that surrounds the polypeptide exit tunnel on the outside of the subunit. This Synechococcus elongatus (strain ATCC 33912 / PCC 7942 / FACHB-805) (Anacystis nidulans R2) protein is Large ribosomal subunit protein uL24.